A 310-amino-acid polypeptide reads, in one-letter code: Solute carrier family 25 member 47 (310 aa).

Solcar repeat units lie at residues 1–80, 93–208, and 217–304; these read MDFV…CLAH, PTKA…LSEW, and PDVL…VLRL. Transmembrane regions (helical) follow at residues 3–23, 49–69, 98–116, 192–212, 219–239, and 275–295; these read FVAG…LDTV, LWGF…VSSV, ITLS…TSPT, GHSF…LTPA, VLGV…VATP, and VLFK…MVVF.

The protein belongs to the mitochondrial carrier (TC 2.A.29) family.

The protein resides in the mitochondrion inner membrane. It is found in the mitochondrion outer membrane. It carries out the reaction NAD(+)(in) = NAD(+)(out). It catalyses the reaction acetyl-CoA(in) = acetyl-CoA(out). Its function is as follows. Mitochondrial NAD(+) transporter that acts as a 'metabolic gate' in hepatic lipogenesis. Provides NAD(+) substrate to mitochondrial SIRT3 deacetylase and enables its NAD(+)-dependent activities in mitochondrial energy metabolism. This triggers downstream activation of PRKAA1/AMPK-alpha signaling cascade that negatively regulates sterol regulatory element-binding protein (SREBP) transcriptional activities and ATP-consuming lipogenesis to restore cellular energy balance. May transport other mitochondrial metabolites having an aromatic nucleotide and phosphate groups, such as acetyl-CoA. Does not transport amino acids. The transport mechanism remains to be elucidated. This is Solute carrier family 25 member 47 from Rattus norvegicus (Rat).